Consider the following 201-residue polypeptide: MDKFVKLTGVAAPLPVVNIDTDMIIPKDYLKTIKRTGLGTGLFAEARYNEDGSPNPDFVLNKPAYQNAKILVAGDNFGCGSSREHAPWALLDFGIRCVISTSFADIFYNNCFKNGILPIVVSQEDLDKLMDDASRGSNAVLTIDLEALEITGPDGGSIKFEVDAFKRHCLLNGLDDIGLTLEKGRSIDNFEKATAASRPWA.

This sequence belongs to the LeuD family. LeuD type 1 subfamily. Heterodimer of LeuC and LeuD.

It carries out the reaction (2R,3S)-3-isopropylmalate = (2S)-2-isopropylmalate. It participates in amino-acid biosynthesis; L-leucine biosynthesis; L-leucine from 3-methyl-2-oxobutanoate: step 2/4. Functionally, catalyzes the isomerization between 2-isopropylmalate and 3-isopropylmalate, via the formation of 2-isopropylmaleate. The chain is 3-isopropylmalate dehydratase small subunit from Sinorhizobium medicae (strain WSM419) (Ensifer medicae).